The sequence spans 317 residues: MASAGAERRPGVQEATVVGQGQLTEEPGSAQTSECPVAGDQFLVPAHEARGTQSEDQRPAGAASESELQEEGPKLGEERPKPHAGALEERGPRPVVSIVRPRHGPKRKPVKSLSLPGLRAHLKAEAELPPKLPLQEEEPEDSQSEPSPSAKQHKKAKKRKSLGAPVLHAVASMVSAPLETLRLERKAQRLRPLYQYVNYCNPELNQAGKGDGEAEVEAEAELAPVPEEGGVEQLQALLPLAGELGPGLALPCPSPLVTPTHALAPLGEEAGEEPGGLPSLGVSDHKAEVDKSTQVDIDKMLSVCTAPLVPPLSPQYK.

The segment covering 1-11 (MASAGAERRPG) has biased composition (basic and acidic residues). The segment at 1–164 (MASAGAERRP…KAKKRKSLGA (164 aa)) is disordered. A compositionally biased stretch (polar residues) spans 19 to 34 (GQGQLTEEPGSAQTSE). Composition is skewed to basic and acidic residues over residues 47-58 (HEARGTQSEDQR) and 71-92 (EGPK…ERGP). 2 stretches are compositionally biased toward basic residues: residues 100 to 110 (RPRHGPKRKPV) and 151 to 161 (KQHKKAKKRKS).

This is an uncharacterized protein from Homo sapiens (Human).